Reading from the N-terminus, the 381-residue chain is MRFIKRPLISIVNDHLIDYPTPINIHYAWNFGFLSSICLIVQILTGIFLAMHYTPHVDLAFASVEHIMRDVNYGWLLRYIHTNGASMFFIVVYIHIFRGLYFGSYIKPRHWVWVIGVLILLLMILTAFIGYVLPWGQMSLWGATVITNLVSAVPFIGDSIVTWLWGGFSVDNATLNRFFSLHYLMPFVIAAVSLVHLAILHQDGSGNPLGIDSNVDKVSMFPYFIVKDFLGMVIFIIFFSIFVYFSPNVLGHPDNYIEANPMVTPAHIVPEWYFLPFYAILRSIPHKLGGVTAMISAIAILAFLPWIHSTEIRSSRFRPLYRLFYWVMISCCLILGWIGGMPVENPYVIIGQIASIYYFIYFIILLPVLGRIEKFLLEFKI.

The next 4 helical transmembrane spans lie at 31–51 (FGFL…FLAM), 75–97 (WLLR…IHIF), 112–132 (VWVI…IGYV), and 178–198 (FFSL…VHLA). 2 residues coordinate heme b: His-81 and His-95. Heme b contacts are provided by His-182 and His-196. Residue His-201 coordinates a ubiquinone. Helical transmembrane passes span 224–244 (FIVK…IFVY), 288–308 (LGGV…PWIH), 320–340 (LYRL…WIGG), and 347–367 (YVII…ILLP).

This sequence belongs to the cytochrome b family. As to quaternary structure, the main subunits of complex b-c1 are: cytochrome b, cytochrome c1 and the Rieske protein. Heme b is required as a cofactor.

The protein resides in the mitochondrion inner membrane. Its function is as follows. Component of the ubiquinol-cytochrome c reductase complex (complex III or cytochrome b-c1 complex) that is part of the mitochondrial respiratory chain. The b-c1 complex mediates electron transfer from ubiquinol to cytochrome c. Contributes to the generation of a proton gradient across the mitochondrial membrane that is then used for ATP synthesis. The protein is Cytochrome b (MT-CYB) of Chondrus crispus (Carrageen Irish moss).